Here is a 96-residue protein sequence, read N- to C-terminus: Large ribosomal subunit protein eL43 (96 aa).

C41, C44, C59, and C62 together coordinate Zn(2+). The C4-type zinc-finger motif lies at 41–62 (CPVCAFPKLKRAGTSIWVCEKC).

This sequence belongs to the eukaryotic ribosomal protein eL43 family. Putative zinc-binding subfamily. As to quaternary structure, part of the 50S ribosomal subunit. Zn(2+) is required as a cofactor.

Functionally, binds to the 23S rRNA. This Methanococcus maripaludis (strain DSM 14266 / JCM 13030 / NBRC 101832 / S2 / LL) protein is Large ribosomal subunit protein eL43.